A 451-amino-acid chain; its full sequence is tRNA modification GTPase MnmE (451 aa).

Positions 28, 85, and 124 each coordinate (6S)-5-formyl-5,6,7,8-tetrahydrofolate. In terms of domain architecture, TrmE-type G spans 220–377 (GMNVVLVGQP…LRSELLRVAG (158 aa)). A K(+)-binding site is contributed by Asn230. GTP is bound by residues 230 to 235 (NVGKSS), 249 to 255 (TDIAGTT), and 274 to 277 (DTAG). A Mg(2+)-binding site is contributed by Ser234. Residues Thr249, Ile251, and Thr254 each coordinate K(+). Thr255 contributes to the Mg(2+) binding site. Lys451 contributes to the (6S)-5-formyl-5,6,7,8-tetrahydrofolate binding site.

The protein belongs to the TRAFAC class TrmE-Era-EngA-EngB-Septin-like GTPase superfamily. TrmE GTPase family. As to quaternary structure, homodimer. Heterotetramer of two MnmE and two MnmG subunits. K(+) is required as a cofactor.

The protein resides in the cytoplasm. In terms of biological role, exhibits a very high intrinsic GTPase hydrolysis rate. Involved in the addition of a carboxymethylaminomethyl (cmnm) group at the wobble position (U34) of certain tRNAs, forming tRNA-cmnm(5)s(2)U34. The chain is tRNA modification GTPase MnmE from Aromatoleum aromaticum (strain DSM 19018 / LMG 30748 / EbN1) (Azoarcus sp. (strain EbN1)).